The following is a 274-amino-acid chain: Nitrogenase iron protein (274 aa).

Residue 8–15 coordinates ATP; sequence GKGGIGKS. Cys-94 is a [4Fe-4S] cluster binding site. The residue at position 97 (Arg-97) is an ADP-ribosylarginine; by dinitrogenase reductase ADP-ribosyltransferase. Residue Cys-131 participates in [4Fe-4S] cluster binding.

This sequence belongs to the NifH/BchL/ChlL family. As to quaternary structure, homodimer. [4Fe-4S] cluster serves as cofactor. Post-translationally, the reversible ADP-ribosylation of Arg-97 inactivates the nitrogenase reductase and regulates nitrogenase activity.

The enzyme catalyses N2 + 8 reduced [2Fe-2S]-[ferredoxin] + 16 ATP + 16 H2O = H2 + 8 oxidized [2Fe-2S]-[ferredoxin] + 2 NH4(+) + 16 ADP + 16 phosphate + 6 H(+). Functionally, the key enzymatic reactions in nitrogen fixation are catalyzed by the nitrogenase complex, which has 2 components: the iron protein and the molybdenum-iron protein. The polypeptide is Nitrogenase iron protein (Azobacteroides pseudotrichonymphae genomovar. CFP2).